The chain runs to 342 residues: GTP 3',8-cyclase (342 aa).

The Radical SAM core domain maps to 18–247; that stretch reads GFSRRFYYLR…QLRGADDGPA (230 aa). Arg-27 is a GTP binding site. Residues Cys-34 and Cys-38 each coordinate [4Fe-4S] cluster. Tyr-40 provides a ligand contact to S-adenosyl-L-methionine. Cys-41 contributes to the [4Fe-4S] cluster binding site. Position 81 (Arg-81) interacts with GTP. Gly-85 lines the S-adenosyl-L-methionine pocket. Position 112 (Thr-112) interacts with GTP. Ser-136 is an S-adenosyl-L-methionine binding site. A GTP-binding site is contributed by Lys-173. S-adenosyl-L-methionine is bound at residue Met-207. Residues Cys-270 and Cys-273 each contribute to the [4Fe-4S] cluster site. 275-277 contacts GTP; the sequence is RLR. Cys-287 contributes to the [4Fe-4S] cluster binding site.

The protein belongs to the radical SAM superfamily. MoaA family. Monomer and homodimer. It depends on [4Fe-4S] cluster as a cofactor.

It carries out the reaction GTP + AH2 + S-adenosyl-L-methionine = (8S)-3',8-cyclo-7,8-dihydroguanosine 5'-triphosphate + 5'-deoxyadenosine + L-methionine + A + H(+). Its pathway is cofactor biosynthesis; molybdopterin biosynthesis. Its function is as follows. Catalyzes the cyclization of GTP to (8S)-3',8-cyclo-7,8-dihydroguanosine 5'-triphosphate. The protein is GTP 3',8-cyclase of Aeromonas hydrophila subsp. hydrophila (strain ATCC 7966 / DSM 30187 / BCRC 13018 / CCUG 14551 / JCM 1027 / KCTC 2358 / NCIMB 9240 / NCTC 8049).